We begin with the raw amino-acid sequence, 187 residues long: Flavin prenyltransferase UbiX (187 aa).

Residues 9–11, T34, 88–91, and R123 contribute to the FMN site; these read GSS and SISS. 2 residues coordinate dimethylallyl phosphate: Y153 and K169.

This sequence belongs to the UbiX/PAD1 family.

It catalyses the reaction dimethylallyl phosphate + FMNH2 = prenylated FMNH2 + phosphate. Flavin prenyltransferase that catalyzes the synthesis of the prenylated FMN cofactor (prenyl-FMN) for 4-hydroxy-3-polyprenylbenzoic acid decarboxylase UbiD. The prenyltransferase is metal-independent and links a dimethylallyl moiety from dimethylallyl monophosphate (DMAP) to the flavin N5 and C6 atoms of FMN. In Campylobacter jejuni subsp. jejuni serotype O:2 (strain ATCC 700819 / NCTC 11168), this protein is Flavin prenyltransferase UbiX.